Here is a 239-residue protein sequence, read N- to C-terminus: Endonuclease V (239 aa).

Positions 48 and 116 each coordinate Mg(2+).

The protein belongs to the endonuclease V family. It depends on Mg(2+) as a cofactor.

The protein localises to the cytoplasm. The enzyme catalyses Endonucleolytic cleavage at apurinic or apyrimidinic sites to products with a 5'-phosphate.. Its function is as follows. DNA repair enzyme involved in the repair of deaminated bases. Selectively cleaves double-stranded DNA at the second phosphodiester bond 3' to a deoxyinosine leaving behind the intact lesion on the nicked DNA. The protein is Endonuclease V of Xanthomonas oryzae pv. oryzae (strain MAFF 311018).